Consider the following 302-residue polypeptide: 4-diphosphocytidyl-2-C-methyl-D-erythritol kinase (302 aa).

K11 is an active-site residue. An ATP-binding site is contributed by 93-103 (PVASGLAGGST). The active site involves D135.

This sequence belongs to the GHMP kinase family. IspE subfamily.

It carries out the reaction 4-CDP-2-C-methyl-D-erythritol + ATP = 4-CDP-2-C-methyl-D-erythritol 2-phosphate + ADP + H(+). Its pathway is isoprenoid biosynthesis; isopentenyl diphosphate biosynthesis via DXP pathway; isopentenyl diphosphate from 1-deoxy-D-xylulose 5-phosphate: step 3/6. Functionally, catalyzes the phosphorylation of the position 2 hydroxy group of 4-diphosphocytidyl-2C-methyl-D-erythritol. This chain is 4-diphosphocytidyl-2-C-methyl-D-erythritol kinase, found in Gloeobacter violaceus (strain ATCC 29082 / PCC 7421).